The following is a 218-amino-acid chain: uncharacterized protein (218 aa).

The next 2 helical transmembrane spans lie at 14–34 (CLLS…YFTS) and 175–195 (LIIP…LALV).

To H.pylori HP0270.

The protein resides in the cell membrane. This is an uncharacterized protein from Rickettsia prowazekii (strain Madrid E).